The sequence spans 120 residues: Large ribosomal subunit protein uL18 (120 aa).

The interval Met-1–Thr-23 is disordered. Residues Ser-8 to Ile-20 show a composition bias toward basic residues.

The protein belongs to the universal ribosomal protein uL18 family. In terms of assembly, part of the 50S ribosomal subunit; part of the 5S rRNA/L5/L18/L25 subcomplex. Contacts the 5S and 23S rRNAs.

Its function is as follows. This is one of the proteins that bind and probably mediate the attachment of the 5S RNA into the large ribosomal subunit, where it forms part of the central protuberance. In Microcystis aeruginosa (strain NIES-843 / IAM M-2473), this protein is Large ribosomal subunit protein uL18.